The primary structure comprises 88 residues: Putative membrane protein insertion efficiency factor (88 aa).

This sequence belongs to the UPF0161 family.

The protein resides in the cell inner membrane. In terms of biological role, could be involved in insertion of integral membrane proteins into the membrane. In Synechococcus sp. (strain CC9311), this protein is Putative membrane protein insertion efficiency factor.